The following is a 319-amino-acid chain: Ribosomal RNA small subunit methyltransferase H (319 aa).

S-adenosyl-L-methionine is bound by residues 39–41 (GGH), Asp59, Phe83, Asp104, and Gln111.

The protein belongs to the methyltransferase superfamily. RsmH family.

The protein localises to the cytoplasm. It carries out the reaction cytidine(1402) in 16S rRNA + S-adenosyl-L-methionine = N(4)-methylcytidine(1402) in 16S rRNA + S-adenosyl-L-homocysteine + H(+). Functionally, specifically methylates the N4 position of cytidine in position 1402 (C1402) of 16S rRNA. This is Ribosomal RNA small subunit methyltransferase H from Ralstonia nicotianae (strain ATCC BAA-1114 / GMI1000) (Ralstonia solanacearum).